The sequence spans 210 residues: Floral homeotic protein FBP1 (210 aa).

The MADS-box domain maps to Arg3–Phe57. The 92-residue stretch at His82–Asn173 folds into the K-box domain.

As to expression, petals.

It is found in the nucleus. Probable transcription factor. This Petunia hybrida (Petunia) protein is Floral homeotic protein FBP1 (FBP1).